A 309-amino-acid chain; its full sequence is MPELPEVETTKTSLAPLLGQKVTNVQVFQPKLRWSIPDNLADLVDYTLDSVERRAKYLILNFIPLADDGISSTVQPRNLQPRQLLVHLGMSGSLQQHNHASDKRKHDHLIMSFIGADSTQTQLHYYDPRRFGSILWLEEYGDKLLNHLGPEPLSDAFTADYLYHLIQRSRQSIQTQNSKSIKKQPIKRAIKSVIMEQQAVVGVGNIYATESLYLSGIHPATPANEVSYAQIVILVAHIKTILQKAIKLGGSTLRDFTVADGQTGYFQQTLNVYGRQGNACPHCESTLENIKLNGRASVYCPLCQPIISM.

Residue Pro2 is the Schiff-base intermediate with DNA of the active site. The Proton donor role is filled by Glu3. Lys56 (proton donor; for beta-elimination activity) is an active-site residue. The DNA site is built by His106 and Arg129. The FPG-type zinc-finger motif lies at 271-305; the sequence is NVYGRQGNACPHCESTLENIKLNGRASVYCPLCQP. Arg295 (proton donor; for delta-elimination activity) is an active-site residue.

It belongs to the FPG family. In terms of assembly, monomer. The cofactor is Zn(2+).

It carries out the reaction Hydrolysis of DNA containing ring-opened 7-methylguanine residues, releasing 2,6-diamino-4-hydroxy-5-(N-methyl)formamidopyrimidine.. The catalysed reaction is 2'-deoxyribonucleotide-(2'-deoxyribose 5'-phosphate)-2'-deoxyribonucleotide-DNA = a 3'-end 2'-deoxyribonucleotide-(2,3-dehydro-2,3-deoxyribose 5'-phosphate)-DNA + a 5'-end 5'-phospho-2'-deoxyribonucleoside-DNA + H(+). Its function is as follows. Involved in base excision repair of DNA damaged by oxidation or by mutagenic agents. Acts as a DNA glycosylase that recognizes and removes damaged bases. Has a preference for oxidized purines, such as 7,8-dihydro-8-oxoguanine (8-oxoG). Has AP (apurinic/apyrimidinic) lyase activity and introduces nicks in the DNA strand. Cleaves the DNA backbone by beta-delta elimination to generate a single-strand break at the site of the removed base with both 3'- and 5'-phosphates. In Psychrobacter arcticus (strain DSM 17307 / VKM B-2377 / 273-4), this protein is Formamidopyrimidine-DNA glycosylase.